We begin with the raw amino-acid sequence, 253 residues long: Type III pantothenate kinase (253 aa).

ATP is bound at residue 6 to 13; that stretch reads DVGNTNTV. 103–106 serves as a coordination point for substrate; the sequence is GADR. Asp105 acts as the Proton acceptor in catalysis. Asp125 is a K(+) binding site. Thr128 provides a ligand contact to ATP. Substrate is bound at residue Thr180.

This sequence belongs to the type III pantothenate kinase family. In terms of assembly, homodimer. The cofactor is NH4(+). Requires K(+) as cofactor.

The protein localises to the cytoplasm. It catalyses the reaction (R)-pantothenate + ATP = (R)-4'-phosphopantothenate + ADP + H(+). The protein operates within cofactor biosynthesis; coenzyme A biosynthesis; CoA from (R)-pantothenate: step 1/5. In terms of biological role, catalyzes the phosphorylation of pantothenate (Pan), the first step in CoA biosynthesis. This Parafrankia sp. (strain EAN1pec) protein is Type III pantothenate kinase.